Reading from the N-terminus, the 306-residue chain is Lipoyl synthase (306 aa).

[4Fe-4S] cluster-binding residues include C41, C46, C52, C68, C72, C75, and S281. The Radical SAM core domain maps to 54–270; that stretch reads GARRTATFMI…RKVAMDKGFK (217 aa). The interval 283 to 306 is disordered; it reads HADEQVNEAAKEKHRLGEEKLQQN.

This sequence belongs to the radical SAM superfamily. Lipoyl synthase family. Requires [4Fe-4S] cluster as cofactor.

The protein localises to the cytoplasm. The catalysed reaction is [[Fe-S] cluster scaffold protein carrying a second [4Fe-4S](2+) cluster] + N(6)-octanoyl-L-lysyl-[protein] + 2 oxidized [2Fe-2S]-[ferredoxin] + 2 S-adenosyl-L-methionine + 4 H(+) = [[Fe-S] cluster scaffold protein] + N(6)-[(R)-dihydrolipoyl]-L-lysyl-[protein] + 4 Fe(3+) + 2 hydrogen sulfide + 2 5'-deoxyadenosine + 2 L-methionine + 2 reduced [2Fe-2S]-[ferredoxin]. It functions in the pathway protein modification; protein lipoylation via endogenous pathway; protein N(6)-(lipoyl)lysine from octanoyl-[acyl-carrier-protein]. Functionally, catalyzes the radical-mediated insertion of two sulfur atoms into the C-6 and C-8 positions of the octanoyl moiety bound to the lipoyl domains of lipoate-dependent enzymes, thereby converting the octanoylated domains into lipoylated derivatives. This chain is Lipoyl synthase, found in Staphylococcus haemolyticus (strain JCSC1435).